The following is a 706-amino-acid chain: Frizzled-6 (706 aa).

The signal sequence occupies residues 1-18 (MEMFTFLLTCIFLPLLRG). The FZ domain occupies 19–132 (HSLFTCEPIT…CDRLQYCDET (114 aa)). Residues 19 to 201 (HSLFTCEPIT…SDELEFAKSF (183 aa)) are Extracellular-facing. 5 disulfides stabilise this stretch: Cys-24-Cys-85, Cys-32-Cys-78, Cys-69-Cys-106, Cys-95-Cys-129, and Cys-99-Cys-123. Residue Asn-38 is glycosylated (N-linked (GlcNAc...) asparagine). The helical transmembrane segment at 202–222 (IGTVSIFCLCATLFTFLTFLI) threads the bilayer. Topologically, residues 223-233 (DVRRFRYPERP) are cytoplasmic. The helical transmembrane segment at 234-254 (IIYYSVCYSIVSLMYFIGFLL) threads the bilayer. Topologically, residues 255-284 (GDSTACNKADEKLELGDTVVLGSQNKACTV) are extracellular. A helical membrane pass occupies residues 285-305 (LFMLLYFFTMAGTVWWVILTI). At 306-324 (TWFLAAGRKWSCEAIEQKA) the chain is on the cytoplasmic side. The helical transmembrane segment at 325–345 (VWFHAVAWGTPGFLTVMLLAM) threads the bilayer. Residues 346-370 (NKVEGDNISGVCFVGLYDLDASRYF) are Extracellular-facing. Asn-352 carries an N-linked (GlcNAc...) asparagine glycan. Residues 371–391 (VLLPLCLCVFVGLSLLLAGII) form a helical membrane-spanning segment. The Cytoplasmic portion of the chain corresponds to 392-416 (SLNHVRQVIQHDGRNQEKLKKFMIR). A helical membrane pass occupies residues 417-437 (IGVFSGLYLVPLVTLLGCYVY). Over 438-473 (EQVNRITWEITWVSDHCRQYHIPCPYQAKAKARPEL) the chain is Extracellular. Residues 474 to 494 (ALFMIKYLMTLIVGISAVFWV) form a helical membrane-spanning segment. The Cytoplasmic segment spans residues 495–706 (GSKKTCTEWA…EQGGGCHSDT (212 aa)). Positions 498-503 (KTCTEW) match the Lys-Thr-X-X-X-Trp motif, mediates interaction with the PDZ domain of Dvl family members motif. Residues 588–706 (EIQTSPETSM…EQGGGCHSDT (119 aa)) form a disordered region. The span at 646–658 (ARSEGRISPKSDI) shows a compositional bias: basic and acidic residues. Position 653 is a phosphoserine (Ser-653). Over residues 662–672 (GLAQSNNLQVP) the composition is skewed to polar residues. Over residues 673–685 (SSSEPSSLKGSTS) the composition is skewed to low complexity. Residues 694–706 (VRKEQGGGCHSDT) are compositionally biased toward basic and acidic residues.

It belongs to the G-protein coupled receptor Fz/Smo family. Interacts with LMBR1L. Ubiquitinated by ZNRF3, leading to its degradation by the proteasome. In terms of tissue distribution, detected in adult heart, brain, placenta, lung, liver, skeletal muscle, kidney, pancreas, thymus, prostate, testis, ovary, small intestine and colon. In the fetus, expressed in brain, lung, liver and kidney.

Its subcellular location is the membrane. The protein resides in the cell membrane. The protein localises to the cell surface. It is found in the apical cell membrane. It localises to the cytoplasmic vesicle membrane. Its subcellular location is the endoplasmic reticulum membrane. Its function is as follows. Receptor for Wnt proteins. Most of frizzled receptors are coupled to the beta-catenin canonical signaling pathway, which leads to the activation of disheveled proteins, inhibition of GSK-3 kinase, nuclear accumulation of beta-catenin and activation of Wnt target genes. A second signaling pathway involving PKC and calcium fluxes has been seen for some family members, but it is not yet clear if it represents a distinct pathway or if it can be integrated in the canonical pathway, as PKC seems to be required for Wnt-mediated inactivation of GSK-3 kinase. Both pathways seem to involve interactions with G-proteins. May be involved in transduction and intercellular transmission of polarity information during tissue morphogenesis and/or in differentiated tissues. Together with FZD3, is involved in the neural tube closure and plays a role in the regulation of the establishment of planar cell polarity (PCP), particularly in the orientation of asymmetric bundles of stereocilia on the apical faces of a subset of auditory and vestibular sensory cells located in the inner ear. This Homo sapiens (Human) protein is Frizzled-6 (FZD6).